The primary structure comprises 227 residues: Orotidine 5'-phosphate decarboxylase (227 aa).

Substrate-binding positions include aspartate 12, lysine 34, 61-70 (DLKLHDIPNT), threonine 117, arginine 178, glutamine 187, glycine 207, and arginine 208. The active-site Proton donor is lysine 63.

The protein belongs to the OMP decarboxylase family. Type 1 subfamily. As to quaternary structure, homodimer.

The enzyme catalyses orotidine 5'-phosphate + H(+) = UMP + CO2. It functions in the pathway pyrimidine metabolism; UMP biosynthesis via de novo pathway; UMP from orotate: step 2/2. Catalyzes the decarboxylation of orotidine 5'-monophosphate (OMP) to uridine 5'-monophosphate (UMP). The protein is Orotidine 5'-phosphate decarboxylase of Anaeromyxobacter dehalogenans (strain 2CP-1 / ATCC BAA-258).